Reading from the N-terminus, the 464-residue chain is ATP synthase subunit beta (464 aa).

Position 153–160 (153–160 (GGAGVGKT)) interacts with ATP.

Belongs to the ATPase alpha/beta chains family. As to quaternary structure, F-type ATPases have 2 components, CF(1) - the catalytic core - and CF(0) - the membrane proton channel. CF(1) has five subunits: alpha(3), beta(3), gamma(1), delta(1), epsilon(1). CF(0) has three main subunits: a(1), b(2) and c(9-12). The alpha and beta chains form an alternating ring which encloses part of the gamma chain. CF(1) is attached to CF(0) by a central stalk formed by the gamma and epsilon chains, while a peripheral stalk is formed by the delta and b chains.

It localises to the cell membrane. The enzyme catalyses ATP + H2O + 4 H(+)(in) = ADP + phosphate + 5 H(+)(out). Its function is as follows. Produces ATP from ADP in the presence of a proton gradient across the membrane. The catalytic sites are hosted primarily by the beta subunits. The chain is ATP synthase subunit beta from Acetivibrio thermocellus (strain ATCC 27405 / DSM 1237 / JCM 9322 / NBRC 103400 / NCIMB 10682 / NRRL B-4536 / VPI 7372) (Clostridium thermocellum).